The sequence spans 377 residues: Succinyl-diaminopimelate desuccinylase (377 aa).

Residue H68 participates in Zn(2+) binding. D70 is an active-site residue. D101 serves as a coordination point for Zn(2+). Catalysis depends on E135, which acts as the Proton acceptor. 3 residues coordinate Zn(2+): E136, E164, and H350.

This sequence belongs to the peptidase M20A family. DapE subfamily. Homodimer. Requires Zn(2+) as cofactor. The cofactor is Co(2+).

It catalyses the reaction N-succinyl-(2S,6S)-2,6-diaminopimelate + H2O = (2S,6S)-2,6-diaminopimelate + succinate. It participates in amino-acid biosynthesis; L-lysine biosynthesis via DAP pathway; LL-2,6-diaminopimelate from (S)-tetrahydrodipicolinate (succinylase route): step 3/3. Its function is as follows. Catalyzes the hydrolysis of N-succinyl-L,L-diaminopimelic acid (SDAP), forming succinate and LL-2,6-diaminopimelate (DAP), an intermediate involved in the bacterial biosynthesis of lysine and meso-diaminopimelic acid, an essential component of bacterial cell walls. The sequence is that of Succinyl-diaminopimelate desuccinylase from Vibrio cholerae serotype O1 (strain ATCC 39541 / Classical Ogawa 395 / O395).